Here is a 109-residue protein sequence, read N- to C-terminus: uncharacterized protein (109 aa).

Residues 77–98 form a disordered region; the sequence is TRTGHAYPRFTRPSFPSCNRNG.

This is an uncharacterized protein from Homo sapiens (Human).